Here is a 231-residue protein sequence, read N- to C-terminus: Chromosome partition protein MukE (231 aa).

Positions Arg-197–Pro-231 are disordered.

Belongs to the MukE family. As to quaternary structure, interacts, and probably forms a ternary complex, with MukF and MukB. The complex formation is stimulated by calcium or magnesium.

The protein localises to the cytoplasm. The protein resides in the nucleoid. In terms of biological role, involved in chromosome condensation, segregation and cell cycle progression. May participate in facilitating chromosome segregation by condensation DNA from both sides of a centrally located replisome during cell division. Probably acts via its interaction with MukB and MukF. The sequence is that of Chromosome partition protein MukE from Photorhabdus laumondii subsp. laumondii (strain DSM 15139 / CIP 105565 / TT01) (Photorhabdus luminescens subsp. laumondii).